We begin with the raw amino-acid sequence, 137 residues long: Large ribosomal subunit protein uL16 (137 aa).

It belongs to the universal ribosomal protein uL16 family. Part of the 50S ribosomal subunit.

In terms of biological role, binds 23S rRNA and is also seen to make contacts with the A and possibly P site tRNAs. The chain is Large ribosomal subunit protein uL16 from Chlamydia abortus (strain DSM 27085 / S26/3) (Chlamydophila abortus).